The chain runs to 116 residues: Holo-[acyl-carrier-protein] synthase (116 aa).

Mg(2+) is bound by residues Asp-5 and Glu-50.

The protein belongs to the P-Pant transferase superfamily. AcpS family. Requires Mg(2+) as cofactor.

Its subcellular location is the cytoplasm. It carries out the reaction apo-[ACP] + CoA = holo-[ACP] + adenosine 3',5'-bisphosphate + H(+). Functionally, transfers the 4'-phosphopantetheine moiety from coenzyme A to a Ser of acyl-carrier-protein. The chain is Holo-[acyl-carrier-protein] synthase from Campylobacter lari (strain RM2100 / D67 / ATCC BAA-1060).